A 322-amino-acid polypeptide reads, in one-letter code: tRNA-dihydrouridine synthase B (322 aa).

FMN is bound by residues 16–18 (PMA) and Gln70. The Proton donor role is filled by Cys100. Residues Lys139, 200–202 (NGD), and 224–225 (GR) contribute to the FMN site.

It belongs to the Dus family. DusB subfamily. Requires FMN as cofactor.

It carries out the reaction a 5,6-dihydrouridine in tRNA + NAD(+) = a uridine in tRNA + NADH + H(+). The catalysed reaction is a 5,6-dihydrouridine in tRNA + NADP(+) = a uridine in tRNA + NADPH + H(+). Catalyzes the synthesis of 5,6-dihydrouridine (D), a modified base found in the D-loop of most tRNAs, via the reduction of the C5-C6 double bond in target uridines. This Vibrio parahaemolyticus serotype O3:K6 (strain RIMD 2210633) protein is tRNA-dihydrouridine synthase B.